Consider the following 389-residue polypeptide: Probable DNA double-strand break repair nuclease NurA (389 aa).

Mn(2+)-binding residues include D74 and D151.

The protein belongs to the NurA family. Mn(2+) serves as cofactor.

Involved in DNA double-strand break (DSB) repair. Probably acts with HerA to stimulate resection of the 5' strand and produce the long 3' single-strand that is required for RadA loading. The chain is Probable DNA double-strand break repair nuclease NurA from Methanocaldococcus jannaschii (strain ATCC 43067 / DSM 2661 / JAL-1 / JCM 10045 / NBRC 100440) (Methanococcus jannaschii).